Here is a 418-residue protein sequence, read N- to C-terminus: Ciliary microtubule-associated protein 2 (418 aa).

As to expression, sperm.

The polypeptide is Ciliary microtubule-associated protein 2 (Homo sapiens (Human)).